The following is a 333-amino-acid chain: Electron transfer flavoprotein subunit alpha, mitochondrial (333 aa).

A mitochondrion-targeting transit peptide spans 1-19 (MFRAAAPGQLRRATSLLRF). A domain I region spans residues 20 to 204 (QSTLVIAEHA…GISEWLDQKL (185 aa)). An N6-acetyllysine; alternate modification is found at Lys59. At Lys59 the chain carries N6-succinyllysine; alternate. Residue Lys62 is modified to N6-acetyllysine. The residue at position 69 (Lys69) is an N6-acetyllysine; alternate. At Lys69 the chain carries N6-succinyllysine; alternate. Residue Lys75 is modified to N6-acetyllysine. At Lys85 the chain carries N6-acetyllysine; alternate. Residue Lys85 is modified to N6-succinyllysine; alternate. Thr93 carries the post-translational modification Phosphothreonine. Residues Lys101 and Lys139 each carry the N6-acetyllysine modification. Position 140 is a phosphoserine (Ser140). Residue Lys158 is modified to N6-acetyllysine; alternate. Lys158 bears the N6-succinyllysine; alternate mark. The residue at position 164 (Lys164) is an N6-acetyllysine. The residue at position 187 (Lys187) is an N6-succinyllysine. An N6-acetyllysine; alternate modification is found at Lys203. Lys203 is modified (N6-succinyllysine; alternate). Residues 205 to 333 (TKSDRPELTG…PEMTELLKKK (129 aa)) are domain II. At Lys216 the chain carries N6-succinyllysine. Arg223 is a binding site for FAD. Residues Lys226 and Lys232 each carry the N6-acetyllysine; alternate modification. Lys226 and Lys232 each carry N6-succinyllysine; alternate. FAD is bound by residues Ser248, 263 to 266 (VGQT), 281 to 286 (SGAIQH), and Asn300. An N6-succinyllysine modification is found at Lys301. 318–319 (DL) contributes to the FAD binding site.

It belongs to the ETF alpha-subunit/FixB family. Heterodimer composed of ETFA and ETFB. Identified in a complex that contains ETFA, ETFB and ETFRF1. Interaction with ETFRF1 promotes dissociation of the bound FAD and loss of electron transfer activity. Interacts with TASOR. Requires FAD as cofactor.

The protein resides in the mitochondrion matrix. Its function is as follows. Heterodimeric electron transfer flavoprotein that accepts electrons from several mitochondrial dehydrogenases, including acyl-CoA dehydrogenases, glutaryl-CoA and sarcosine dehydrogenase. It transfers the electrons to the main mitochondrial respiratory chain via ETF-ubiquinone oxidoreductase (ETF dehydrogenase). Required for normal mitochondrial fatty acid oxidation and normal amino acid metabolism. This is Electron transfer flavoprotein subunit alpha, mitochondrial (ETFA) from Bos taurus (Bovine).